Here is a 110-residue protein sequence, read N- to C-terminus: PCNA-associated factor (110 aa).

K15 participates in a covalent cross-link: Glycyl lysine isopeptide (Lys-Gly) (interchain with G-Cter in ubiquitin). Positions 23–34 (RKVLGSSTFVTN) match the D-box motif. An N6-acetyllysine; alternate modification is found at K24. A Glycyl lysine isopeptide (Lys-Gly) (interchain with G-Cter in ubiquitin); alternate cross-link involves residue K24. The residue at position 28 (S28) is a Phosphoserine. Residues 29-39 (STFVTNSSGSS) show a composition bias toward low complexity. The interval 29–110 (STFVTNSSGS…QPDHRDDENE (82 aa)) is disordered. A PIP-box motif is present at residues 61-71 (QKGIGEFFRLS). At S71 the chain carries Phosphoserine. Basic and acidic residues predominate over residues 71 to 80 (SPKDSKKENQ). The KEN box signature appears at 77-79 (KEN). The short motif at 84-96 (EAGSSGLGKAKRK) is the Initiation motif element.

As to quaternary structure, interacts (when monoubiquitinated at Lys-15 and Lys-24) with PCNA. Interacts with isoform 2/p33ING1b of ING1. Interacts with BRCA1. Monoubiquitinated at Lys-15 and Lys-24 during normal S phase, promoting its association with PCNA. Also diubiquitinated at these 2 sites. Following DNA damage, monoubiquitin chains at Lys-15 and Lys-24 are probably extended, leading to disrupt the interaction with PCNA. Polyubiquitinated by the APC/C complex at the mitotic exit, leading to its degradation by the proteasome.

It localises to the nucleus. The protein localises to the cytoplasm. Its subcellular location is the perinuclear region. PCNA-binding protein that acts as a regulator of DNA repair during DNA replication. Following DNA damage, the interaction with PCNA is disrupted, facilitating the interaction between monoubiquitinated PCNA and the translesion DNA synthesis DNA polymerase eta (POLH) at stalled replisomes, facilitating the bypass of replication-fork-blocking lesions. Also acts as a regulator of centrosome number. This Rattus norvegicus (Rat) protein is PCNA-associated factor.